The chain runs to 283 residues: Isochorismatase domain-containing protein 1 (283 aa).

This sequence belongs to the isochorismatase family.

This is Isochorismatase domain-containing protein 1 (isoc1) from Danio rerio (Zebrafish).